Here is a 399-residue protein sequence, read N- to C-terminus: S-adenosylmethionine synthase (399 aa).

His-19 is an ATP binding site. Asp-21 lines the Mg(2+) pocket. Residue Glu-47 participates in K(+) binding. The L-methionine site is built by Glu-60 and Gln-103. A flexible loop region spans residues 103–113; the sequence is QSPDIAQGVNQ. ATP contacts are provided by residues 179–181, 246–247, Asp-255, 261–262, Ala-278, and Lys-282; these read DGK, RF, and RK. L-methionine is bound at residue Asp-255. Lys-286 is a binding site for L-methionine.

It belongs to the AdoMet synthase family. In terms of assembly, homotetramer; dimer of dimers. Mg(2+) serves as cofactor. K(+) is required as a cofactor.

Its subcellular location is the cytoplasm. It catalyses the reaction L-methionine + ATP + H2O = S-adenosyl-L-methionine + phosphate + diphosphate. Its pathway is amino-acid biosynthesis; S-adenosyl-L-methionine biosynthesis; S-adenosyl-L-methionine from L-methionine: step 1/1. Catalyzes the formation of S-adenosylmethionine (AdoMet) from methionine and ATP. The overall synthetic reaction is composed of two sequential steps, AdoMet formation and the subsequent tripolyphosphate hydrolysis which occurs prior to release of AdoMet from the enzyme. This chain is S-adenosylmethionine synthase, found in Halalkalibacterium halodurans (strain ATCC BAA-125 / DSM 18197 / FERM 7344 / JCM 9153 / C-125) (Bacillus halodurans).